The sequence spans 115 residues: U31-theraphotoxin-Cg1a (115 aa).

An N-terminal signal peptide occupies residues 1–18 (MKLCVIIIASLMVASVSG). Positions 19-51 (RLRKIKGTELDKKMLLEKLGHGMDIRFEETPRA) are excised as a propeptide. Intrachain disulfides connect cysteine 52/cysteine 67, cysteine 60/cysteine 73, cysteine 64/cysteine 113, and cysteine 66/cysteine 86.

It belongs to the neurotoxin 03 (Tx2) family. 02 subfamily. Expressed by the venom gland.

It is found in the secreted. Functionally, probable ion channel inhibitor. This is U31-theraphotoxin-Cg1a from Chilobrachys guangxiensis (Chinese earth tiger tarantula).